Reading from the N-terminus, the 115-residue chain is Iron-sulfur cluster insertion protein ErpA (115 aa).

Iron-sulfur cluster-binding residues include C42, C106, and C108.

This sequence belongs to the HesB/IscA family. In terms of assembly, homodimer. Iron-sulfur cluster is required as a cofactor.

Functionally, required for insertion of 4Fe-4S clusters for at least IspG. The chain is Iron-sulfur cluster insertion protein ErpA from Baumannia cicadellinicola subsp. Homalodisca coagulata.